The following is a 129-amino-acid chain: Lysozyme C (129 aa).

The region spanning 1-129 is the C-type lysozyme domain; the sequence is KVFGRCELAA…VRVWIKGCRL (129 aa). Cystine bridges form between C6-C127, C30-C115, C64-C80, and C76-C94. Residues E35 and D52 contribute to the active site.

Belongs to the glycosyl hydrolase 22 family. As to quaternary structure, monomer.

It is found in the secreted. It carries out the reaction Hydrolysis of (1-&gt;4)-beta-linkages between N-acetylmuramic acid and N-acetyl-D-glucosamine residues in a peptidoglycan and between N-acetyl-D-glucosamine residues in chitodextrins.. Functionally, lysozymes have primarily a bacteriolytic function; those in tissues and body fluids are associated with the monocyte-macrophage system and enhance the activity of immunoagents. The sequence is that of Lysozyme C (LYZ) from Numida meleagris (Helmeted guineafowl).